Reading from the N-terminus, the 333-residue chain is Testin-2 (333 aa).

The first 17 residues, 1–17 (MIAVLFLAILCLEIDST), serve as a signal peptide directing secretion. 3 disulfides stabilise this stretch: C135/C178, C169/C211, and C269/C322. N173 is a glycosylation site (N-linked (GlcNAc...) asparagine). Residues H276 and N300 contribute to the active site.

The protein belongs to the peptidase C1 family. Expressed in testis and ovary. Low level in spleen, epididymis, kidney, and uterus. Expressed in primary cultures of Sertoli cells.

The protein localises to the secreted. In Mus musculus (Mouse), this protein is Testin-2.